A 367-amino-acid polypeptide reads, in one-letter code: Large ribosomal subunit protein mL38 (367 aa).

The transit peptide at 1–29 directs the protein to the mitochondrion; sequence MLRRSIHTTKILQKPNATSHIWSDFTTRP.

The protein belongs to the phosphatidylethanolamine-binding protein family. Mitochondrion-specific ribosomal protein mL38 subfamily. As to quaternary structure, component of the mitochondrial large ribosomal subunit (mt-LSU). Mature yeast 74S mitochondrial ribosomes consist of a small (37S) and a large (54S) subunit. The 37S small subunit contains a 15S ribosomal RNA (15S mt-rRNA) and 34 different proteins. The 54S large subunit contains a 21S rRNA (21S mt-rRNA) and 46 different proteins.

The protein localises to the mitochondrion. Its function is as follows. Component of the mitochondrial ribosome (mitoribosome), a dedicated translation machinery responsible for the synthesis of mitochondrial genome-encoded proteins, including at least some of the essential transmembrane subunits of the mitochondrial respiratory chain. The mitoribosomes are attached to the mitochondrial inner membrane and translation products are cotranslationally integrated into the membrane. The chain is Large ribosomal subunit protein mL38 (MRPL35) from Saccharomyces cerevisiae (strain ATCC 204508 / S288c) (Baker's yeast).